We begin with the raw amino-acid sequence, 212 residues long: Octanoyltransferase (212 aa).

The BPL/LPL catalytic domain occupies 30–205 (ETTVDELWCL…ELVEGLGHSQ (176 aa)). Residues 69-76 (RGGQVTYH), 136-138 (SLG), and 149-151 (GLA) contribute to the substrate site. Residue Cys-167 is the Acyl-thioester intermediate of the active site.

Belongs to the LipB family.

Its subcellular location is the cytoplasm. It catalyses the reaction octanoyl-[ACP] + L-lysyl-[protein] = N(6)-octanoyl-L-lysyl-[protein] + holo-[ACP] + H(+). The protein operates within protein modification; protein lipoylation via endogenous pathway; protein N(6)-(lipoyl)lysine from octanoyl-[acyl-carrier-protein]: step 1/2. Catalyzes the transfer of endogenously produced octanoic acid from octanoyl-acyl-carrier-protein onto the lipoyl domains of lipoate-dependent enzymes. Lipoyl-ACP can also act as a substrate although octanoyl-ACP is likely to be the physiological substrate. In Marinobacter nauticus (strain ATCC 700491 / DSM 11845 / VT8) (Marinobacter aquaeolei), this protein is Octanoyltransferase.